We begin with the raw amino-acid sequence, 344 residues long: Chorismatase (344 aa).

4 residues coordinate substrate: tyrosine 155, arginine 162, tyrosine 215, and arginine 228. Catalysis depends on glutamate 338, which acts as the Proton acceptor.

The protein belongs to the FkbO/Hyg5 family. Monomer.

The catalysed reaction is chorismate + H2O = (3R,4R)-3,4-dihydroxy-3,4-dihydrobenzoate + pyruvate. Competitively inhibited by 3-(2-carboxyethyl)benzoate. Its function is as follows. Involved in the biosynthesis of the macrocyclic amino acid-linked polyketides FK506 and FK520 which are potent immunosuppressants that prevent T-cell proliferation through initial binding to the immunophilin FKBP12. Catalyzes the hydrolysis of chorismate via a 1,4-conjugate elimination of water to yield (4R,5R)-4,5-dihydroxycyclohexa-1,5-dienecarboxylic acid (DCDC). The polypeptide is Chorismatase (fkbO) (Streptomyces hygroscopicus).